Consider the following 196-residue polypeptide: ATP-dependent Clp protease proteolytic subunit (196 aa).

The active-site Nucleophile is S96. H121 is a catalytic residue.

The protein belongs to the peptidase S14 family. In terms of assembly, fourteen ClpP subunits assemble into 2 heptameric rings which stack back to back to give a disk-like structure with a central cavity, resembling the structure of eukaryotic proteasomes.

The protein resides in the cytoplasm. The enzyme catalyses Hydrolysis of proteins to small peptides in the presence of ATP and magnesium. alpha-casein is the usual test substrate. In the absence of ATP, only oligopeptides shorter than five residues are hydrolyzed (such as succinyl-Leu-Tyr-|-NHMec, and Leu-Tyr-Leu-|-Tyr-Trp, in which cleavage of the -Tyr-|-Leu- and -Tyr-|-Trp bonds also occurs).. In terms of biological role, cleaves peptides in various proteins in a process that requires ATP hydrolysis. Has a chymotrypsin-like activity. Plays a major role in the degradation of misfolded proteins. This chain is ATP-dependent Clp protease proteolytic subunit, found in Streptococcus suis (strain 98HAH33).